Reading from the N-terminus, the 360-residue chain is Homoserine O-acetyltransferase (360 aa).

Positions 41–344 constitute an AB hydrolase-1 domain; the sequence is NAILICHALT…DYGHDAFLVD (304 aa). The Nucleophile role is filled by Ser144. Arg213 provides a ligand contact to substrate. Catalysis depends on residues Asp305 and His338. Asp339 is a substrate binding site.

The protein belongs to the AB hydrolase superfamily. MetX family. Homodimer.

It is found in the cytoplasm. It carries out the reaction L-homoserine + acetyl-CoA = O-acetyl-L-homoserine + CoA. Its pathway is amino-acid biosynthesis; L-methionine biosynthesis via de novo pathway; O-acetyl-L-homoserine from L-homoserine: step 1/1. Transfers an acetyl group from acetyl-CoA to L-homoserine, forming acetyl-L-homoserine. The chain is Homoserine O-acetyltransferase from Pasteurella multocida (strain Pm70).